We begin with the raw amino-acid sequence, 275 residues long: Release factor glutamine methyltransferase (275 aa).

Residues 114–118 (GTGSG), Asp-137, Trp-165, and Asn-180 each bind S-adenosyl-L-methionine. Substrate is bound at residue 180–183 (NPPY).

It belongs to the protein N5-glutamine methyltransferase family. PrmC subfamily.

The enzyme catalyses L-glutaminyl-[peptide chain release factor] + S-adenosyl-L-methionine = N(5)-methyl-L-glutaminyl-[peptide chain release factor] + S-adenosyl-L-homocysteine + H(+). Functionally, methylates the class 1 translation termination release factors RF1/PrfA and RF2/PrfB on the glutamine residue of the universally conserved GGQ motif. The sequence is that of Release factor glutamine methyltransferase from Xylella fastidiosa (strain Temecula1 / ATCC 700964).